A 195-amino-acid polypeptide reads, in one-letter code: DnaJ homolog subfamily C member 5 (195 aa).

A J domain is found at 13–82; sequence GDSLYIVLGL…RNIYDKYGSL (70 aa). A disordered region spans residues 162–195; it reads DMEKEGDGAIVVQPTSATETTQLTSDSHPSYHTE. A compositionally biased stretch (polar residues) spans 174-189; that stretch reads QPTSATETTQLTSDSH.

Palmitoylated. Palmitoylation occurs probably in the cysteine-rich domain and regulates DNAJC5 stable membrane attachment.

The protein resides in the cytoplasm. It is found in the cytosol. Its subcellular location is the membrane. It localises to the cytoplasmic vesicle. The protein localises to the secretory vesicle. The protein resides in the chromaffin granule membrane. It is found in the melanosome. Its subcellular location is the cell membrane. In terms of biological role, may have an important role in presynaptic function. May be involved in calcium-dependent neurotransmitter release at nerve endings. The chain is DnaJ homolog subfamily C member 5 from Tetronarce californica (Pacific electric ray).